Reading from the N-terminus, the 182-residue chain is MVEEEVAKKYDSSFTAGKNTVQQIQAQVDTATQEESSQGPVLLNQHPETTSVPYTPETVGQQLMVSLPGEPHGTSAMPSMCPSLILQPCATTDPMLLQPQVMGPSASNQASVSATLEWQEMLEAAEALLALKNSSQTRHQPCGMPGTAGERGLQLANPSMPPRPTSSGSLPSGHLDCMSLLT.

T15 bears the Phosphoserine mark. Over residues 26–39 (AQVDTATQEESSQG) the composition is skewed to polar residues. Disordered regions lie at residues 26–48 (AQVD…QHPE) and 136–174 (QTRH…PSGH).

This sequence belongs to the DMRT family. Expressed in Sertoli cells in male testis.

The chain is Doublesex- and mab-3-related transcription factor C1 (Dmrtc1) from Mus musculus (Mouse).